Reading from the N-terminus, the 120-residue chain is Large ribosomal subunit protein uL22 (120 aa).

Belongs to the universal ribosomal protein uL22 family. Part of the 50S ribosomal subunit.

In terms of biological role, this protein binds specifically to 23S rRNA; its binding is stimulated by other ribosomal proteins, e.g. L4, L17, and L20. It is important during the early stages of 50S assembly. It makes multiple contacts with different domains of the 23S rRNA in the assembled 50S subunit and ribosome. The globular domain of the protein is located near the polypeptide exit tunnel on the outside of the subunit, while an extended beta-hairpin is found that lines the wall of the exit tunnel in the center of the 70S ribosome. This chain is Large ribosomal subunit protein uL22, found in Acaryochloris marina (strain MBIC 11017).